The following is a 598-amino-acid chain: Elongation factor 4 (598 aa).

One can recognise a tr-type G domain in the interval 2–184 (TKIRNFSIIA…AVVDRIPPPS (183 aa)). Residues 14 to 19 (DHGKST) and 131 to 134 (NKID) contribute to the GTP site.

The protein belongs to the TRAFAC class translation factor GTPase superfamily. Classic translation factor GTPase family. LepA subfamily.

The protein resides in the cell inner membrane. It catalyses the reaction GTP + H2O = GDP + phosphate + H(+). Its function is as follows. Required for accurate and efficient protein synthesis under certain stress conditions. May act as a fidelity factor of the translation reaction, by catalyzing a one-codon backward translocation of tRNAs on improperly translocated ribosomes. Back-translocation proceeds from a post-translocation (POST) complex to a pre-translocation (PRE) complex, thus giving elongation factor G a second chance to translocate the tRNAs correctly. Binds to ribosomes in a GTP-dependent manner. The polypeptide is Elongation factor 4 (Syntrophobacter fumaroxidans (strain DSM 10017 / MPOB)).